Here is an 804-residue protein sequence, read N- to C-terminus: ATP-dependent RNA helicase dbp4 (804 aa).

The disordered stretch occupies residues 1–24; the sequence is MAPANAPRNGKYAKSSQRTLKRKR. The Q motif motif lies at 46 to 74; the sequence is KAFTDLPLSEPTLSGLSASHYKTLTDIQS. One can recognise a Helicase ATP-binding domain in the interval 77 to 251; the sequence is VSHALKGRDI…RLSLQDPEYV (175 aa). Position 90 to 97 (90 to 97) interacts with ATP; it reads AKTGSGKT. Positions 199–202 match the DEAD box motif; sequence DEAD. In terms of domain architecture, Helicase C-terminal spans 277–436; that stretch reads KLDILWSFIR…SIKNQLQNMC (160 aa). Disordered regions lie at residues 493–541, 589–615, and 695–804; these read GDDT…DRMF, DKQLEVGGSSDESGSDSEAETGKKDVK, and LADV…GLLG. Over residues 521 to 541 the composition is skewed to basic and acidic residues; the sequence is DEKKSKKKDAPQVRTKYDRMF. Residues 695-705 are compositionally biased toward basic and acidic residues; the sequence is LADVEDKELVK. A compositionally biased stretch (basic residues) spans 706-715; it reads QKRREKKEKR.

The protein belongs to the DEAD box helicase family. DDX10/DBP4 subfamily. Interacts with the U3 and U14 snoRNAs. Associates with pre-ribosomal complexes.

The protein resides in the nucleus. The protein localises to the nucleolus. It catalyses the reaction ATP + H2O = ADP + phosphate + H(+). ATP-dependent RNA helicase required for ribosome biogenesis. Involved in the release of U14 snoRNA in pre-ribosomal complexes. Required for pre-rRNA cleavage at site A2. The chain is ATP-dependent RNA helicase dbp4 (dbp4) from Aspergillus terreus (strain NIH 2624 / FGSC A1156).